A 56-amino-acid chain; its full sequence is Large ribosomal subunit protein eL37 (56 aa).

Residues C19, C22, C34, and C37 each contribute to the Zn(2+) site. The segment at 19–37 (CRRCGSVSFNVHTKQCTSC) adopts a C4-type zinc-finger fold.

The protein belongs to the eukaryotic ribosomal protein eL37 family. Zn(2+) is required as a cofactor.

In terms of biological role, binds to the 23S rRNA. This chain is Large ribosomal subunit protein eL37 (rpl37e), found in Methanosarcina acetivorans (strain ATCC 35395 / DSM 2834 / JCM 12185 / C2A).